We begin with the raw amino-acid sequence, 129 residues long: MSYKFPNYLRYADTHEYVKEENGLFKIGVSEFAIDQLGDIVFVELVEKGTNLQKGETFGTIESVKAVEEVYLPFSGEVISVNEGVIDNPEILQNDPIGDGWLLIIKSESNVLLDELMNSDEYKSKVVPN.

A Lipoyl-binding domain is found at 24–106; sequence LFKIGVSEFA…IGDGWLLIIK (83 aa). The residue at position 65 (lysine 65) is an N6-lipoyllysine.

The protein belongs to the GcvH family. As to quaternary structure, the glycine cleavage system is composed of four proteins: P, T, L and H. The cofactor is (R)-lipoate.

In terms of biological role, the glycine cleavage system catalyzes the degradation of glycine. The H protein shuttles the methylamine group of glycine from the P protein to the T protein. The sequence is that of Glycine cleavage system H protein from Prochlorococcus marinus subsp. pastoris (strain CCMP1986 / NIES-2087 / MED4).